The primary structure comprises 319 residues: Malate dehydrogenase (319 aa).

NAD(+) is bound by residues 11–16 (GAGNVG) and Asp-36. Substrate contacts are provided by Arg-85 and Arg-91. Residues Asn-98 and 121 to 123 (VSN) each bind NAD(+). Substrate contacts are provided by Asn-123 and Arg-154. The Proton acceptor role is filled by His-178.

The protein belongs to the LDH/MDH superfamily. MDH type 3 family.

The catalysed reaction is (S)-malate + NAD(+) = oxaloacetate + NADH + H(+). Functionally, catalyzes the reversible oxidation of malate to oxaloacetate. The sequence is that of Malate dehydrogenase from Sulfurimonas denitrificans (strain ATCC 33889 / DSM 1251) (Thiomicrospira denitrificans (strain ATCC 33889 / DSM 1251)).